Here is a 283-residue protein sequence, read N- to C-terminus: Cyclin-C (283 aa).

One can recognise a Cyclin N-terminal domain in the interval 46-144; that stretch reads NVIQALGEHL…VLECEFYLLE (99 aa). The interval 252–283 is disordered; it reads TILSKMPKPKPPPNSEGEQGPNGSQNSSYSQS. Over residues 272-283 the composition is skewed to polar residues; sequence PNGSQNSSYSQS. S275 bears the Phosphoserine mark.

It belongs to the cyclin family. Cyclin C subfamily. In terms of assembly, component of the Mediator complex, which is composed of MED1, MED4, MED6, MED7, MED8, MED9, MED10, MED11, MED12, MED13, MED13L, MED14, MED15, MED16, MED17, MED18, MED19, MED20, MED21, MED22, MED23, MED24, MED25, MED26, MED27, MED29, MED30, MED31, CCNC, CDK8 and CDC2L6/CDK11. The MED12, MED13, CCNC and CDK8 subunits form a distinct module termed the CDK8 module. Mediator containing the CDK8 module is less active than Mediator lacking this module in supporting transcriptional activation. Individual preparations of the Mediator complex lacking one or more distinct subunits have been variously termed ARC, CRSP, DRIP, PC2, SMCC and TRAP. The cylin/CDK pair formed by CCNC/CDK8 also associates with the large subunit of RNA polymerase II.

It localises to the nucleus. Component of the Mediator complex, a coactivator involved in regulated gene transcription of nearly all RNA polymerase II-dependent genes. Mediator functions as a bridge to convey information from gene-specific regulatory proteins to the basal RNA polymerase II transcription machinery. Mediator is recruited to promoters by direct interactions with regulatory proteins and serves as a scaffold for the assembly of a functional preinitiation complex with RNA polymerase II and the general transcription factors. Binds to and activates cyclin-dependent kinase CDK8 that phosphorylates the CTD (C-terminal domain) of the large subunit of RNA polymerase II (RNAp II), which may inhibit the formation of a transcription initiation complex. In Bos taurus (Bovine), this protein is Cyclin-C (CCNC).